The chain runs to 54 residues: Ovomucoid (54 aa).

One can recognise a Kazal-like domain in the interval 4-54; that stretch reads VDCSDYPRPVCTLDYMPLCGSDNKTYSNKCNFCNAVVDSNGTITLSHFGRC. Intrachain disulfides connect Cys6–Cys36, Cys14–Cys33, and Cys22–Cys54. A glycan (N-linked (GlcNAc...) asparagine) is linked at Asn43.

Its subcellular location is the secreted. The chain is Ovomucoid from Corvus albus (Pied crow).